A 241-amino-acid chain; its full sequence is Uracil-DNA glycosylase (241 aa).

Asp71 acts as the Proton acceptor in catalysis. The disordered stretch occupies residues Ile221–Ala241.

The protein belongs to the uracil-DNA glycosylase (UDG) superfamily. UNG family.

It localises to the cytoplasm. The enzyme catalyses Hydrolyzes single-stranded DNA or mismatched double-stranded DNA and polynucleotides, releasing free uracil.. Functionally, excises uracil residues from the DNA which can arise as a result of misincorporation of dUMP residues by DNA polymerase or due to deamination of cytosine. In Xanthomonas oryzae pv. oryzae (strain MAFF 311018), this protein is Uracil-DNA glycosylase.